The sequence spans 381 residues: Queuine tRNA-ribosyltransferase (381 aa).

Residue Asp96 is the Proton acceptor of the active site. Residues 96-100 (DSGGF), Asp150, Gln193, and Gly220 contribute to the substrate site. Residues 251–257 (GVGSPDA) form an RNA binding region. Asp270 acts as the Nucleophile in catalysis. The segment at 275-279 (TRIAR) is RNA binding; important for wobble base 34 recognition. The Zn(2+) site is built by Cys308, Cys310, Cys313, and His339.

Belongs to the queuine tRNA-ribosyltransferase family. In terms of assembly, homodimer. Within each dimer, one monomer is responsible for RNA recognition and catalysis, while the other monomer binds to the replacement base PreQ1. Requires Zn(2+) as cofactor.

The catalysed reaction is 7-aminomethyl-7-carbaguanine + guanosine(34) in tRNA = 7-aminomethyl-7-carbaguanosine(34) in tRNA + guanine. Its pathway is tRNA modification; tRNA-queuosine biosynthesis. In terms of biological role, catalyzes the base-exchange of a guanine (G) residue with the queuine precursor 7-aminomethyl-7-deazaguanine (PreQ1) at position 34 (anticodon wobble position) in tRNAs with GU(N) anticodons (tRNA-Asp, -Asn, -His and -Tyr). Catalysis occurs through a double-displacement mechanism. The nucleophile active site attacks the C1' of nucleotide 34 to detach the guanine base from the RNA, forming a covalent enzyme-RNA intermediate. The proton acceptor active site deprotonates the incoming PreQ1, allowing a nucleophilic attack on the C1' of the ribose to form the product. After dissociation, two additional enzymatic reactions on the tRNA convert PreQ1 to queuine (Q), resulting in the hypermodified nucleoside queuosine (7-(((4,5-cis-dihydroxy-2-cyclopenten-1-yl)amino)methyl)-7-deazaguanosine). This Bacillus subtilis (strain 168) protein is Queuine tRNA-ribosyltransferase.